The chain runs to 124 residues: Fluoride-specific ion channel FluC (124 aa).

Helical transmembrane passes span 3–23 (YLLV…INTV), 36–56 (TFFI…YFAF), 66–86 (LFLM…SLDA), and 100–120 (LYVL…LALI). 2 residues coordinate Na(+): glycine 74 and threonine 77.

Belongs to the fluoride channel Fluc/FEX (TC 1.A.43) family.

Its subcellular location is the cell inner membrane. The enzyme catalyses fluoride(in) = fluoride(out). Na(+) is not transported, but it plays an essential structural role and its presence is essential for fluoride channel function. In terms of biological role, fluoride-specific ion channel. Important for reducing fluoride concentration in the cell, thus reducing its toxicity. This chain is Fluoride-specific ion channel FluC, found in Rhodopseudomonas palustris (strain BisB5).